The sequence spans 256 residues: tRNA (guanine-N(7)-)-methyltransferase (256 aa).

The segment at 17–45 (TCETVPGLPQKKHYRQRAHSNPHSDHDIE) is disordered. Residues 26–36 (QKKHYRQRAHS) are compositionally biased toward basic residues. S-adenosyl-L-methionine contacts are provided by residues glycine 74, 97–98 (EI), 132–133 (NA), and leucine 152. Residue aspartate 155 is part of the active site. 230–232 (TEE) is a binding site for S-adenosyl-L-methionine.

Belongs to the class I-like SAM-binding methyltransferase superfamily. TrmB family.

The protein resides in the nucleus. The enzyme catalyses guanosine(46) in tRNA + S-adenosyl-L-methionine = N(7)-methylguanosine(46) in tRNA + S-adenosyl-L-homocysteine. It participates in tRNA modification; N(7)-methylguanine-tRNA biosynthesis. Catalyzes the formation of N(7)-methylguanine at position 46 (m7G46) in tRNA. This chain is tRNA (guanine-N(7)-)-methyltransferase, found in Caenorhabditis elegans.